A 600-amino-acid chain; its full sequence is Beta-hexosaminidase (600 aa).

Positions 1-18 are cleaved as a signal peptide; it reads MRISQICTVLSTVTSAVA. The propeptide occupies 19–96; the sequence is VGVNPLPAPR…PFPTPTAGAS (78 aa). Threonine 78 is a glycosylation site (O-linked (Man...) threonine). O-linked (Man...) serine glycosylation is found at serine 83 and serine 84. Catalysis depends on charge relay system residues aspartate 222 and histidine 275. An intrachain disulfide couples cysteine 290 to cysteine 351. N-linked (HexNAc...) asparagine glycosylation is present at asparagine 318. Glutamate 346 acts as the Charge relay system in catalysis. An N-linked (GlcNAc...) asparagine glycan is attached at asparagine 353. Asparagine 387 carries an N-linked (HexNAc...) asparagine glycan. The N-linked (GlcNAc...) asparagine glycan is linked to asparagine 428. The cysteines at positions 448 and 483 are disulfide-linked. N-linked (GlcNAc...) asparagine glycans are attached at residues asparagine 500 and asparagine 525. An intrachain disulfide couples cysteine 583 to cysteine 590.

The protein belongs to the glycosyl hydrolase 20 family. In terms of assembly, homodimer. Oligosaccharide moieties may also take part in the dimerization. Dimerization is a pH-dependent reversible process. The individual catalytic cores dimerize and the catalytic core of one subunit in the active dimer interacts with the propeptide of the second subunit. In terms of processing, the precursor of the propeptide is intracellularly processed in the endoplasmic reticulum by a dibasic peptidase, different from Kex2, removing Lys-97--Arg-101 from the precursor producing the activated propeptide. The propeptide binds non-covalently to the catalytic domain. Propeptide binding is necessary for full activation of the enzyme, dimerization of the catalytic domain and secretion of the active enzyme. O-glycosylated. O-glycosylation (O-mannosylation) at the C-terminus of the propeptide is necessary for full enzyme activity. N-glycosylated. N-glycosylation of the catalytic domain increases the stability and solubility of the enzyme, especially at low pH. Contains high mannose-type (M4-M11) N-glycans at the C-terminus. N-glycan deglycosylation does not affect enzyme activity.

The protein resides in the secreted. It carries out the reaction Hydrolysis of terminal non-reducing N-acetyl-D-hexosamine residues in N-acetyl-beta-D-hexosaminides.. Its activity is regulated as follows. Activated by non-covalent binding of the propeptide to the catalytic domain. The concentration of the propeptide is regulated in the endoplasmic reticulum and the propeptide thus regulates the amount of the active enzyme at various stages of the growth cycle. The dimeric enzyme has about half of the maximal activity in the presence of one bound propeptide, but is fully active with two bound O-glycosylated propeptides. Inhibited by N-acetylglucosamine (NAG)-thiazoline. Selectively hydrolyzes GlcNAcbeta(1-&gt;4)GlcNAc (N,N'-diacetylchitobiose) and Gal-NAcbeta(1-&gt;4)GlcNAc, but not their C-2 epimers GlcNAcbeta(1-&gt;4)ManNAc or Gal-NAcbeta(1-&gt;4)ManNAc. However, hydrolyzes both GlcNAcbeta(1-&gt;6)GlcNAc and GlcNAcbeta(1-&gt;6)ManNAc. Part of the binary chitinolytic system. Involved in hydrolysis of chitobiose and higher chito-oligomers (produced from cell wall chitin by endochitinases), thus contributing to the formation of germ tubes, fruit-bodies and septa during hyphenation. Hydrolyzes synthetic substrate p-nitrophenyl-beta-N-acetyl-D-glucosaminide (pNP-GlcNAc). Hydrolyzes synthetic substrate p-nitrophenyl-beta-N-acetyl-D-galactosaminide (pNP-GalNAc). Hydrolyzes chromogenic substrate 4-nitrophenyl-2-acetamido-2-deoxyglucopyranoside. The protein is Beta-hexosaminidase of Aspergillus oryzae (Yellow koji mold).